Reading from the N-terminus, the 306-residue chain is Glutaminase (306 aa).

7 residues coordinate substrate: Ser62, Asn114, Glu159, Asn166, Tyr190, Tyr242, and Val260.

Belongs to the glutaminase family. As to quaternary structure, homotetramer.

It carries out the reaction L-glutamine + H2O = L-glutamate + NH4(+). This chain is Glutaminase, found in Clostridium tetani (strain Massachusetts / E88).